We begin with the raw amino-acid sequence, 379 residues long: MSSAPEKQQPPHGGGGGGGGGGGAAMDPASSGPSKAKKTNAGIRRPEKPPYSYIALIVMAIQSSPTKRLTLSEIYQFLQSRFPFFRGSYQGWKNSVRHNLSLNECFIKLPKGLGRPGKGHYWTIDPASEFMFEEGSFRRRPRGFRRKCQALKPMYSMMNGLGFNHLPDTYGFQGSAGGLSCPPNSLALEGGLGMMNGHLPGNVDGMALPSHSVPHLPSNGGHSYMGGCGGAAAGEYPHHDSSVPASPLLPTGAGGVMEPHAVYSGSAAAWPPSASAALNSGASYIKQQPLSPCNPAANPLSGSLSTHSLEQPYLHQNSHNAPAELQGIPRYHSQSPSMCDRKEFVFSFNAMASSSMHSAGGGSYYHQQVTYQDIKPCVM.

The segment at 1–45 is disordered; that stretch reads MSSAPEKQQPPHGGGGGGGGGGGAAMDPASSGPSKAKKTNAGIRR. Residues 12 to 24 are compositionally biased toward gly residues; it reads HGGGGGGGGGGGA. The fork-head DNA-binding region spans 47–138; the sequence is EKPPYSYIAL…EFMFEEGSFR (92 aa).

As to expression, expressed in lung and placenta.

It localises to the nucleus. Its function is as follows. Probable transcription activator for a number of lung-specific genes. The chain is Forkhead box protein F1 (FOXF1) from Homo sapiens (Human).